We begin with the raw amino-acid sequence, 199 residues long: MENEFQDGKTEVIEAWYMDDSEEDQRLPHHREPKEFIHVDKLTELGVISWRLNPDNWENCENLKRIREARGYSYVDICDVCPEKLPNYETKIKSFFEEHLHTDEEIRYCLEGSGYFDVRDQNDQWIRIALKKGGMIVLPAGMYHRFTLDTDNYIKAMRLFVGDPVWTPYNRPHDHLPARKEFLAKLLKSEGENQAVEGF.

Fe(2+) is bound by residues His-99, His-101, Glu-105, and His-144. The Ni(2+) site is built by His-99, His-101, Glu-105, and His-144.

Belongs to the acireductone dioxygenase (ARD) family. Fe(2+) is required as a cofactor. It depends on Ni(2+) as a cofactor.

Its subcellular location is the cytoplasm. It is found in the nucleus. It carries out the reaction 1,2-dihydroxy-5-(methylsulfanyl)pent-1-en-3-one + O2 = 4-methylsulfanyl-2-oxobutanoate + formate + 2 H(+). The enzyme catalyses 1,2-dihydroxy-5-(methylsulfanyl)pent-1-en-3-one + O2 = 3-(methylsulfanyl)propanoate + CO + formate + 2 H(+). The protein operates within amino-acid biosynthesis; L-methionine biosynthesis via salvage pathway; L-methionine from S-methyl-5-thio-alpha-D-ribose 1-phosphate: step 5/6. In terms of biological role, catalyzes 2 different reactions between oxygen and the acireductone 1,2-dihydroxy-3-keto-5-methylthiopentene (DHK-MTPene) depending upon the metal bound in the active site. Fe-containing acireductone dioxygenase (Fe-ARD) produces formate and 2-keto-4-methylthiobutyrate (KMTB), the alpha-ketoacid precursor of methionine in the methionine recycle pathway. Ni-containing acireductone dioxygenase (Ni-ARD) produces methylthiopropionate, carbon monoxide and formate, and does not lie on the methionine recycle pathway. This chain is Acireductone dioxygenase 1 (ARD1), found in Oryza sativa subsp. indica (Rice).